Here is a 258-residue protein sequence, read N- to C-terminus: Snake venom serine protease 2 (258 aa).

A signal peptide spans 1–18; that stretch reads MVLIRVLANLLILQLSYA. The propeptide occupies 19–24; sequence QKSSEL. A Peptidase S1 domain is found at 25–249; sequence VFGGRPCNIN…YNDWVQSIIA (225 aa). Cystine bridges form between cysteine 31–cysteine 163, cysteine 50–cysteine 66, cysteine 98–cysteine 256, cysteine 142–cysteine 210, cysteine 174–cysteine 189, and cysteine 200–cysteine 225. The N-linked (GlcNAc...) asparagine glycan is linked to asparagine 44. Active-site charge relay system residues include histidine 65 and aspartate 110. N-linked (GlcNAc...) asparagine glycosylation is found at asparagine 122 and asparagine 185. Catalysis depends on serine 204, which acts as the Charge relay system.

It belongs to the peptidase S1 family. Snake venom subfamily. In terms of assembly, monomer. Expressed by the venom gland.

The protein localises to the secreted. Its activity is regulated as follows. Inhibited by PMSF at 2 mM concentration but not by EDTA. Functionally, snake venom serine protease that may act in the hemostasis system of the prey. Has weak fibrinogen clotting activity. Possesses amidolysis activity towards S-2251 (substrate for plasmin) but has no hydrolytic activity with S-2302 (plasma kallikrein substrate) or S-2238 (thrombin substrate). This is Snake venom serine protease 2 from Protobothrops jerdonii (Jerdon's pitviper).